The sequence spans 380 residues: Mitogen-activated protein kinase 3 (380 aa).

A2 bears the N-acetylalanine mark. One can recognise a Protein kinase domain in the interval Y43–L331. Residues I49–V57 and K72 contribute to the ATP site. The active-site Proton acceptor is D167. T199 is modified (phosphothreonine). T203 is subject to Phosphothreonine; by MAP2K1 and MAP2K2. A TXY motif is present at residues T203–Y205. The residue at position 205 (Y205) is a Phosphotyrosine; by MAP2K1 and MAP2K2. A Phosphothreonine; by autocatalysis modification is found at T208.

The protein belongs to the protein kinase superfamily. CMGC Ser/Thr protein kinase family. MAP kinase subfamily. As to quaternary structure, binds both upstream activators and downstream substrates in multimolecular complexes. Found in a complex with at least BRAF, HRAS, MAP2K1/MEK1, MAPK3 and RGS14. Interacts with TPR. Interacts with ADAM15, ARRB2, CANX, DAPK1 (via death domain), HSF4, IER3, MAP2K1/MEK1, NISCH, and SGK1. Interacts with MORG1. Interacts with PEA15. Interacts with isoform 1 of MKNK2 and this binding prevents from dephosphorylation and inactivation. Interacts with CDKN2AIP. Interacts with HSF1 (via D domain and preferentially with hyperphosphorylated form); this interaction occurs upon heat shock. Interacts with CAVIN4. Interacts with GIT1; this interaction is necessary for MAPK3 localization to focal adhesions. Interacts with ZNF263. Interacts with EBF4. The cofactor is Mg(2+). In terms of processing, dually phosphorylated on Thr-203 and Tyr-205, which activates the enzyme. Ligand-activated ALK induces tyrosine phosphorylation. Dephosphorylated by PTPRJ at Tyr-205. Autophosphorylated on threonine and tyrosine residues in vitro. Phosphorylated upon FLT3 and KIT signaling. Ubiquitinated by TRIM15 via 'Lys-63'-linked ubiquitination; leading to activation. Deubiquitinated by CYLD.

The protein resides in the cytoplasm. It is found in the nucleus. The protein localises to the membrane. It localises to the caveola. Its subcellular location is the cell junction. The protein resides in the focal adhesion. It catalyses the reaction L-seryl-[protein] + ATP = O-phospho-L-seryl-[protein] + ADP + H(+). The enzyme catalyses L-threonyl-[protein] + ATP = O-phospho-L-threonyl-[protein] + ADP + H(+). With respect to regulation, phosphorylated by MAP2K1/MEK1 and MAP2K2/MEK2 on Thr-203 and Tyr-205 in response to external stimuli like insulin or NGF. Both phosphorylations are required for activity. This phosphorylation causes dramatic conformational changes, which enable full activation and interaction of MAPK1/ERK2 with its substrates. Dephosphorylated and inactivated by DUSP3, DUSP6 and DUSP9. Functionally, serine/threonine kinase which acts as an essential component of the MAP kinase signal transduction pathway. MAPK1/ERK2 and MAPK3/ERK1 are the 2 MAPKs which play an important role in the MAPK/ERK cascade. They participate also in a signaling cascade initiated by activated KIT and KITLG/SCF. Depending on the cellular context, the MAPK/ERK cascade mediates diverse biological functions such as cell growth, adhesion, survival and differentiation through the regulation of transcription, translation, cytoskeletal rearrangements. The MAPK/ERK cascade also plays a role in initiation and regulation of meiosis, mitosis, and postmitotic functions in differentiated cells by phosphorylating a number of transcription factors. About 160 substrates have already been discovered for ERKs. Many of these substrates are localized in the nucleus, and seem to participate in the regulation of transcription upon stimulation. However, other substrates are found in the cytosol as well as in other cellular organelles, and those are responsible for processes such as translation, mitosis and apoptosis. Moreover, the MAPK/ERK cascade is also involved in the regulation of the endosomal dynamics, including lysosome processing and endosome cycling through the perinuclear recycling compartment (PNRC); as well as in the fragmentation of the Golgi apparatus during mitosis. The substrates include transcription factors (such as ATF2, BCL6, ELK1, ERF, FOS, HSF4 or SPZ1), cytoskeletal elements (such as CANX, CTTN, GJA1, MAP2, MAPT, PXN, SORBS3 or STMN1), regulators of apoptosis (such as BAD, BTG2, CASP9, DAPK1, IER3, MCL1 or PPARG), regulators of translation (such as EIF4EBP1) and a variety of other signaling-related molecules (like ARHGEF2, DEPTOR, FRS2 or GRB10). Protein kinases (such as RAF1, RPS6KA1/RSK1, RPS6KA3/RSK2, RPS6KA2/RSK3, RPS6KA6/RSK4, SYK, MKNK1/MNK1, MKNK2/MNK2, RPS6KA5/MSK1, RPS6KA4/MSK2, MAPKAPK3 or MAPKAPK5) and phosphatases (such as DUSP1, DUSP4, DUSP6 or DUSP16) are other substrates which enable the propagation the MAPK/ERK signal to additional cytosolic and nuclear targets, thereby extending the specificity of the cascade. The protein is Mitogen-activated protein kinase 3 (Mapk3) of Mus musculus (Mouse).